A 395-amino-acid polypeptide reads, in one-letter code: Cytoplasmic tRNA 2-thiolation protein 1 (395 aa).

The span at threonine 297–lysine 309 shows a compositional bias: basic residues. The tract at residues threonine 297 to asparagine 335 is disordered.

It belongs to the TtcA family. CTU1/NCS6/ATPBD3 subfamily.

It is found in the cytoplasm. The protein operates within tRNA modification; 5-methoxycarbonylmethyl-2-thiouridine-tRNA biosynthesis. Functionally, plays a central role in 2-thiolation of mcm(5)S(2)U at tRNA wobble positions of tRNA(Lys), tRNA(Glu) and tRNA(Gln). Directly binds tRNAs and probably acts by catalyzing adenylation of tRNAs, an intermediate required for 2-thiolation. It is unclear whether it acts as a sulfurtransferase that transfers sulfur from thiocarboxylated URM1 onto the uridine of tRNAs at wobble position. Prior mcm(5) tRNA modification by the elongator complex is required for 2-thiolation. May also be involved in protein urmylation. This is Cytoplasmic tRNA 2-thiolation protein 1 from Candida albicans (strain SC5314 / ATCC MYA-2876) (Yeast).